Here is a 228-residue protein sequence, read N- to C-terminus: Small ribosomal subunit protein uS2 (228 aa).

It belongs to the universal ribosomal protein uS2 family.

This is Small ribosomal subunit protein uS2 from Blochmanniella pennsylvanica (strain BPEN).